The sequence spans 61 residues: Photosystem II reaction center protein K (61 aa).

Residues 1–24 constitute a propeptide that is removed on maturation; the sequence is MLNIFNLICICFNSALFSSTFLVA. A helical transmembrane segment spans residues 40 to 60; that stretch reads MPVIPLFFLLLAFVWQAAVSF.

The protein belongs to the PsbK family. PSII is composed of 1 copy each of membrane proteins PsbA, PsbB, PsbC, PsbD, PsbE, PsbF, PsbH, PsbI, PsbJ, PsbK, PsbL, PsbM, PsbT, PsbX, PsbY, PsbZ, Psb30/Ycf12, at least 3 peripheral proteins of the oxygen-evolving complex and a large number of cofactors. It forms dimeric complexes.

It is found in the plastid. It localises to the chloroplast thylakoid membrane. Functionally, one of the components of the core complex of photosystem II (PSII). PSII is a light-driven water:plastoquinone oxidoreductase that uses light energy to abstract electrons from H(2)O, generating O(2) and a proton gradient subsequently used for ATP formation. It consists of a core antenna complex that captures photons, and an electron transfer chain that converts photonic excitation into a charge separation. This Sinapis alba (White mustard) protein is Photosystem II reaction center protein K.